The sequence spans 312 residues: Pre-mRNA-splicing factor 38A (312 aa).

An N-terminal protein interaction domain region spans residues 1–179 (MANRTVKDAH…VLEEAEQLEP (179 aa)). Phosphoserine is present on residues Ser-11, Ser-193, Ser-194, Ser-209, and Ser-226. The stretch at 170-204 (VLEEAEQLEPRVSALEEDMDDVESSEEEEEEDEKL) forms a coiled coil. The segment at 181–312 (VSALEEDMDD…SHKKSRRGNE (132 aa)) is disordered. Acidic residues predominate over residues 184–202 (LEEDMDDVESSEEEEEEDE). Positions 203-224 (KLERVPSPDHRRRSYRDLDKPR) are enriched in basic and acidic residues. 2 stretches are compositionally biased toward basic residues: residues 225 to 294 (RSPA…RSHS) and 301 to 312 (KKSHKKSRRGNE).

This sequence belongs to the PRP38 family. Component of the spliceosome B complex. Interacts (via N-terminal interaction domain) with ZMAT2 and MFAP1.

The protein localises to the nucleus. Involved in pre-mRNA splicing as a component of the spliceosome. The protein is Pre-mRNA-splicing factor 38A (Prpf38a) of Mus musculus (Mouse).